Reading from the N-terminus, the 233-residue chain is UPF0758 protein Rcas_0037 (233 aa).

The region spanning 107-229 (QIRSPTDAAQ…FVSMRERGLA (123 aa)) is the MPN domain. 3 residues coordinate Zn(2+): histidine 178, histidine 180, and aspartate 191. The JAMM motif motif lies at 178–191 (HNHPSGDPTPSPED).

It belongs to the UPF0758 family.

The chain is UPF0758 protein Rcas_0037 from Roseiflexus castenholzii (strain DSM 13941 / HLO8).